The following is a 250-amino-acid chain: 5'-nucleotidase SurE (250 aa).

Residues aspartate 8, aspartate 9, serine 39, and asparagine 92 each coordinate a divalent metal cation.

Belongs to the SurE nucleotidase family. A divalent metal cation serves as cofactor.

The protein resides in the cytoplasm. The enzyme catalyses a ribonucleoside 5'-phosphate + H2O = a ribonucleoside + phosphate. Nucleotidase that shows phosphatase activity on nucleoside 5'-monophosphates. The protein is 5'-nucleotidase SurE of Vibrio cholerae serotype O1 (strain ATCC 39315 / El Tor Inaba N16961).